The chain runs to 105 residues: MNTLFGKTKEEAKPIVLKSVDEYPEAPISLGTTLVNPTGDWRTFKPVVNEEKCVKCYICWKYCPEPAIYIKPDGYVAIDYDYCKGCGICANECPTKAITMIKEEK.

4Fe-4S ferredoxin-type domains lie at 44–73 (FKPV…IKPD) and 74–103 (GYVA…MIKE). [4Fe-4S] cluster is bound by residues Cys-53, Cys-56, Cys-59, Cys-63, Cys-83, Cys-86, Cys-89, and Cys-93.

Heterotetramer of one alpha, one beta, one delta and one gamma chain. [4Fe-4S] cluster is required as a cofactor.

The catalysed reaction is 3-methyl-2-oxobutanoate + 2 oxidized [2Fe-2S]-[ferredoxin] + CoA = 2-methylpropanoyl-CoA + 2 reduced [2Fe-2S]-[ferredoxin] + CO2 + H(+). The polypeptide is Ketoisovalerate oxidoreductase subunit VorD (vorD) (Pyrococcus furiosus (strain ATCC 43587 / DSM 3638 / JCM 8422 / Vc1)).